The primary structure comprises 215 residues: Putative lipoprotein NMB1124/NMB1162 (215 aa).

Residues 1 to 16 (MKPLILGLAAVLALSA) form the signal peptide. C17 carries N-palmitoyl cysteine lipidation. C17 carries S-diacylglycerol cysteine lipidation.

It localises to the cell membrane. This Neisseria meningitidis serogroup B (strain ATCC BAA-335 / MC58) protein is Putative lipoprotein NMB1124/NMB1162.